Here is a 306-residue protein sequence, read N- to C-terminus: Acyl transferase (306 aa).

Catalysis depends on charge relay system residues S117, D214, and H244.

It belongs to the LuxD family.

Its pathway is lipid metabolism; fatty acid reduction for biolumincescence. Acyl transferase is part of the fatty acid reductase system required for aldehyde biosynthesis; it produces fatty acids for the luminescent reaction. The protein is Acyl transferase of Photobacterium phosphoreum.